The sequence spans 343 residues: Holliday junction branch migration complex subunit RuvB (343 aa).

Residues Met-1–Gly-26 are disordered. Residues Glu-3–Tyr-193 are large ATPase domain (RuvB-L). Over residues Thr-7 to Val-16 the composition is skewed to polar residues. ATP contacts are provided by residues Leu-32, Arg-33, Gly-74, Lys-77, Thr-78, Thr-79, Glu-140 to Phe-142, Arg-183, Tyr-193, and Arg-230. A Mg(2+)-binding site is contributed by Thr-78. The small ATPAse domain (RuvB-S) stretch occupies residues Ser-194 to Gly-264. The tract at residues Glu-267–Gly-343 is head domain (RuvB-H). Positions 322 and 327 each coordinate DNA.

The protein belongs to the RuvB family. As to quaternary structure, homohexamer. Forms an RuvA(8)-RuvB(12)-Holliday junction (HJ) complex. HJ DNA is sandwiched between 2 RuvA tetramers; dsDNA enters through RuvA and exits via RuvB. An RuvB hexamer assembles on each DNA strand where it exits the tetramer. Each RuvB hexamer is contacted by two RuvA subunits (via domain III) on 2 adjacent RuvB subunits; this complex drives branch migration. In the full resolvosome a probable DNA-RuvA(4)-RuvB(12)-RuvC(2) complex forms which resolves the HJ.

It is found in the cytoplasm. The catalysed reaction is ATP + H2O = ADP + phosphate + H(+). In terms of biological role, the RuvA-RuvB-RuvC complex processes Holliday junction (HJ) DNA during genetic recombination and DNA repair, while the RuvA-RuvB complex plays an important role in the rescue of blocked DNA replication forks via replication fork reversal (RFR). RuvA specifically binds to HJ cruciform DNA, conferring on it an open structure. The RuvB hexamer acts as an ATP-dependent pump, pulling dsDNA into and through the RuvAB complex. RuvB forms 2 homohexamers on either side of HJ DNA bound by 1 or 2 RuvA tetramers; 4 subunits per hexamer contact DNA at a time. Coordinated motions by a converter formed by DNA-disengaged RuvB subunits stimulates ATP hydrolysis and nucleotide exchange. Immobilization of the converter enables RuvB to convert the ATP-contained energy into a lever motion, pulling 2 nucleotides of DNA out of the RuvA tetramer per ATP hydrolyzed, thus driving DNA branch migration. The RuvB motors rotate together with the DNA substrate, which together with the progressing nucleotide cycle form the mechanistic basis for DNA recombination by continuous HJ branch migration. Branch migration allows RuvC to scan DNA until it finds its consensus sequence, where it cleaves and resolves cruciform DNA. This Desulfosudis oleivorans (strain DSM 6200 / JCM 39069 / Hxd3) (Desulfococcus oleovorans) protein is Holliday junction branch migration complex subunit RuvB.